Here is a 157-residue protein sequence, read N- to C-terminus: Snaclec 3 (157 aa).

The N-terminal stretch at 1-23 (MGRLIFLSFGWLVVFLSLSGTGA) is a signal peptide. Intrachain disulfides connect cysteine 27/cysteine 38, cysteine 55/cysteine 153, and cysteine 128/cysteine 145. Positions 34 to 154 (YGQHCYRAFS…CAGHYPFICK (121 aa)) constitute a C-type lectin domain.

It belongs to the snaclec family. In terms of assembly, heterodimer; disulfide-linked. As to expression, expressed by the venom gland.

It localises to the secreted. Interferes with one step of hemostasis (modulation of platelet aggregation, or coagulation cascade, for example). The chain is Snaclec 3 from Bitis gabonica (Gaboon adder).